The sequence spans 317 residues: Beta-ketoacyl-[acyl-carrier-protein] synthase III (317 aa).

Catalysis depends on residues cysteine 112 and histidine 244. The segment at 245–249 is ACP-binding; it reads QANLR. Asparagine 274 is a catalytic residue.

The protein belongs to the thiolase-like superfamily. FabH family. Homodimer.

It is found in the cytoplasm. The catalysed reaction is malonyl-[ACP] + acetyl-CoA + H(+) = 3-oxobutanoyl-[ACP] + CO2 + CoA. It participates in lipid metabolism; fatty acid biosynthesis. Its function is as follows. Catalyzes the condensation reaction of fatty acid synthesis by the addition to an acyl acceptor of two carbons from malonyl-ACP. Catalyzes the first condensation reaction which initiates fatty acid synthesis and may therefore play a role in governing the total rate of fatty acid production. Possesses both acetoacetyl-ACP synthase and acetyl transacylase activities. Its substrate specificity determines the biosynthesis of branched-chain and/or straight-chain of fatty acids. The sequence is that of Beta-ketoacyl-[acyl-carrier-protein] synthase III from Shigella dysenteriae serotype 1 (strain Sd197).